The sequence spans 358 residues: Putative spore germination protein YfkT (358 aa).

Helical transmembrane passes span 10–30 (LFFG…ILMI), 36–56 (NAWH…WLMH), 81–101 (IIIL…IRFF), 107–127 (ILFL…FVAI), 143–163 (IFLF…ATQI), 179–199 (LQSG…PLLF), 210–230 (IFAI…SISV), 262–282 (IIAA…LYIV), 297–317 (AMYT…FLNT), and 326–346 (IKPI…YLII).

It belongs to the amino acid-polyamine-organocation (APC) superfamily. Spore germination protein (SGP) (TC 2.A.3.9) family.

Its subcellular location is the cell membrane. Functionally, may be involved in spore germination. The polypeptide is Putative spore germination protein YfkT (yfkT) (Bacillus subtilis (strain 168)).